The sequence spans 290 residues: Cilia- and flagella-associated protein 298 (290 aa).

It belongs to the CFAP298 family. As to quaternary structure, interacts with dnaaf1/swt. Interacts with lrrc6/sea. Interacts with dvl (via DEP and PDZ domains). In terms of tissue distribution, strongly expressed in ciliated tissues of the embryonic trunk, including the pronephric ducts and spinal canal.

The protein localises to the cytoplasm. Its subcellular location is the cytoskeleton. The protein resides in the cilium basal body. Its function is as follows. Plays a role in motile cilium function, possibly by acting on outer dynein arm assembly. Seems to be important for initiation rather than maintenance of cilium motility. Required for correct positioning of cilia at the apical cell surface, suggesting an additional role in the planar cell polarity (PCP) pathway. May suppress canonical Wnt signaling activity. The protein is Cilia- and flagella-associated protein 298 of Danio rerio (Zebrafish).